Here is a 204-residue protein sequence, read N- to C-terminus: Imidazole glycerol phosphate synthase subunit HisH 1 (204 aa).

Positions 5-204 (KVVIIDTGCA…AKLIQNFLEL (200 aa)) constitute a Glutamine amidotransferase type-1 domain. The active-site Nucleophile is the Cys80. Residues His186 and Glu188 contribute to the active site.

As to quaternary structure, heterodimer of HisH and HisF.

The protein localises to the cytoplasm. The enzyme catalyses 5-[(5-phospho-1-deoxy-D-ribulos-1-ylimino)methylamino]-1-(5-phospho-beta-D-ribosyl)imidazole-4-carboxamide + L-glutamine = D-erythro-1-(imidazol-4-yl)glycerol 3-phosphate + 5-amino-1-(5-phospho-beta-D-ribosyl)imidazole-4-carboxamide + L-glutamate + H(+). It carries out the reaction L-glutamine + H2O = L-glutamate + NH4(+). Its pathway is amino-acid biosynthesis; L-histidine biosynthesis; L-histidine from 5-phospho-alpha-D-ribose 1-diphosphate: step 5/9. In terms of biological role, IGPS catalyzes the conversion of PRFAR and glutamine to IGP, AICAR and glutamate. The HisH subunit provides the glutamine amidotransferase activity that produces the ammonia necessary to HisF for the synthesis of IGP and AICAR. This chain is Imidazole glycerol phosphate synthase subunit HisH 1 (hisH1), found in Vibrio vulnificus (strain YJ016).